The following is an 84-amino-acid chain: ATP synthase subunit c (84 aa).

The next 2 helical transmembrane spans lie at 9 to 29 (IIASAILLAVAALGTALGFAI) and 54 to 74 (IVAGLLDAISMIAVGIALLFI).

The protein belongs to the ATPase C chain family. As to quaternary structure, F-type ATPases have 2 components, F(1) - the catalytic core - and F(0) - the membrane proton channel. F(1) has five subunits: alpha(3), beta(3), gamma(1), delta(1), epsilon(1). F(0) has three main subunits: a(1), b(2) and c(10-14). The alpha and beta chains form an alternating ring which encloses part of the gamma chain. F(1) is attached to F(0) by a central stalk formed by the gamma and epsilon chains, while a peripheral stalk is formed by the delta and b chains.

It is found in the cell inner membrane. Its function is as follows. F(1)F(0) ATP synthase produces ATP from ADP in the presence of a proton or sodium gradient. F-type ATPases consist of two structural domains, F(1) containing the extramembraneous catalytic core and F(0) containing the membrane proton channel, linked together by a central stalk and a peripheral stalk. During catalysis, ATP synthesis in the catalytic domain of F(1) is coupled via a rotary mechanism of the central stalk subunits to proton translocation. Key component of the F(0) channel; it plays a direct role in translocation across the membrane. A homomeric c-ring of between 10-14 subunits forms the central stalk rotor element with the F(1) delta and epsilon subunits. This Pasteurella multocida (strain Pm70) protein is ATP synthase subunit c.